The sequence spans 259 residues: Triosephosphate isomerase (259 aa).

Substrate is bound at residue 10-12 (NWK). Residue His-100 is the Electrophile of the active site. The active-site Proton acceptor is Glu-172. Substrate-binding positions include Gly-178, Ser-218, and 239 to 240 (GG).

This sequence belongs to the triosephosphate isomerase family. Homodimer.

The protein localises to the cytoplasm. It catalyses the reaction D-glyceraldehyde 3-phosphate = dihydroxyacetone phosphate. Its pathway is carbohydrate biosynthesis; gluconeogenesis. It functions in the pathway carbohydrate degradation; glycolysis; D-glyceraldehyde 3-phosphate from glycerone phosphate: step 1/1. Involved in the gluconeogenesis. Catalyzes stereospecifically the conversion of dihydroxyacetone phosphate (DHAP) to D-glyceraldehyde-3-phosphate (G3P). In Corynebacterium glutamicum (strain ATCC 13032 / DSM 20300 / JCM 1318 / BCRC 11384 / CCUG 27702 / LMG 3730 / NBRC 12168 / NCIMB 10025 / NRRL B-2784 / 534), this protein is Triosephosphate isomerase.